Consider the following 721-residue polypeptide: Vacuolar transporter chaperone complex subunit 4 (721 aa).

An SPX domain is found at 1–148 (MKFGEHLSKS…GFILKPVFQV (148 aa)). The Cytoplasmic portion of the chain corresponds to 1–630 (MKFGEHLSKS…PKVYFATERT (630 aa)). Lysine 75 participates in a covalent cross-link: Glycyl lysine isopeptide (Lys-Gly) (interchain with G-Cter in ubiquitin). Positions 126–133 (GFQKIIKK) are important for inositol polyphosphate binding. Lysine 200, arginine 264, arginine 266, lysine 281, lysine 294, tyrosine 359, and arginine 361 together coordinate ATP. Residue glutamate 426 coordinates Mn(2+). Residue lysine 458 is part of the active site. Residues 489–512 (PLPTNIEITRPGRSDNEDNDFDED) form a disordered region. Transmembrane regions (helical) follow at residues 631-651 (YLSW…LLTY) and 652-672 (GSPT…AVLI). Residues 673–699 (RTVMVYAKRVVNIRLKRAVDYEDKIGP) lie on the Cytoplasmic side of the membrane. The chain crosses the membrane as a helical span at residues 700 to 720 (GMVSVFLILSILFSFFCNLVA). Residue lysine 721 is a topological domain, vacuolar.

It belongs to the VTC4 family. In terms of assembly, the VTC core complex is an integral membrane heterooligomer composed of the catalytic subunit VTC4 and the accessory subunits VTC1, VTC2 and VTC3. The complex exists in 2 different sub-complexes: VTC1-VTC2-VCT4 and VCT1-VTC3-VTC4. The VCT1-VTC3-VTC4 subcomplex is mostly found on the vacuolar membrane. The VTC1-VTC2-VCT4 subcomplex is observed in the cell periphery, probably ER and nuclear envelope, but localizes to the vacuole under phosphate starvation. Each subunit contains 3 transmembrane helices. VTC1 is a small membrane protein without hydrophilic domain. VTC2, VTC3 and VTC4 are related and have 2 hydrophilic domains that face the cytosol, an N-terminal SPX domain and the central core domain. The central core in VTC4 is the catalytic domain, with the essential catalytic lysine replaced by isoleucine and leucine in VTC2 and VTC3, respectively. The core complex associates with the accessory subunit VTC5. The complex interacts with the v-SNARE NYV1 and with the V(0) subunit of V-ATPase VPH1. The cofactor is Mn(2+).

It is found in the vacuole membrane. Its subcellular location is the cytoplasm. It localises to the cell cortex. The protein resides in the endoplasmic reticulum membrane. The protein localises to the cytoplasmic vesicle. It is found in the autophagosome membrane. The enzyme catalyses [phosphate](n) + ATP = [phosphate](n+1) + ADP. With respect to regulation, activity of the enzyme is Mn(2+)-dependent and enhanced in the presence of pyrophosphate (PPi). Its function is as follows. Catalytic subunit of the vacuolar transporter chaperone (VTC) complex. The VTC complex acts as a vacuolar polyphosphate polymerase that catalyzes the synthesis of inorganic polyphosphate (polyP) via transfer of phosphate from ATP to a growing polyP chain, releasing ADP. VTC exposes its catalytic domain VTC4 to the cytosol, where the growing polyP chain winds through a tunnel-shaped pocket, integrating cytoplasmic polymer synthesis with polyP membrane translocation. The VTC complex carries 9 vacuolar transmembrane domains, which are likely to constitute the translocation channel into the organelle lumen. PolyP synthesis is tightly coupled to its transport into the vacuole lumen, in order to avoid otherwise toxic intermediates in the cytosol, and it depends on the proton gradient across the membrane, formed by V-ATPase. The VTC complex also plays a role in vacuolar membrane fusion. Required for SEC18/NSF activity in SNARE priming, membrane binding of LMA1 and V(0) trans-complex formation. Binds inositol hexakisphosphate (Ins6P) and similar inositol polyphosphates, such as 5-diphospho-inositol pentakisphosphate (5-InsP7); these are important intracellular signaling molecules. Inositol polyphosphate binding promotes vacuolar polyphosphate synthesis. The VTC complex is required for microautophagy. It is a constituent of autophagic tubes and is required for scission of microautophagic vesicles from these tubes. This chain is Vacuolar transporter chaperone complex subunit 4, found in Saccharomyces cerevisiae (strain ATCC 204508 / S288c) (Baker's yeast).